Reading from the N-terminus, the 295-residue chain is MIQVKASTGLVALLGHPVQHSLSPLMHNAAFAAGGQNLVYLAFDVKPGDLAAALAGLKALGFRGANVTVPHKEAIIPYLDAVDPVAARIGAVNTIVNEDRCLKGYNTDGSGFLRSLEEAGFDPAGKRAVILGAGGAARAVAFALATAGCGSLVLANRTPERATELAGALAGAGLPAPVVYRLGDAGMRSEVEAADLVLNTTSLGMWPRVEETPLPPDWFRPGQWVYDLVYNPLETKFLAGARRRGCRVISGLDMLLYQGAAAFTLWTGREAPVAVMDRVLREAMGASSGGPAAGR.

Shikimate contacts are provided by residues 21–23 (SLS) and Thr68. The active-site Proton acceptor is Lys72. Positions 93 and 108 each coordinate shikimate. NADP(+)-binding positions include 132–136 (GAGGA), 156–161 (NRTPER), and Leu228. Tyr230 is a shikimate binding site. Gly251 serves as a coordination point for NADP(+).

This sequence belongs to the shikimate dehydrogenase family. In terms of assembly, homodimer.

The enzyme catalyses shikimate + NADP(+) = 3-dehydroshikimate + NADPH + H(+). The protein operates within metabolic intermediate biosynthesis; chorismate biosynthesis; chorismate from D-erythrose 4-phosphate and phosphoenolpyruvate: step 4/7. Functionally, involved in the biosynthesis of the chorismate, which leads to the biosynthesis of aromatic amino acids. Catalyzes the reversible NADPH linked reduction of 3-dehydroshikimate (DHSA) to yield shikimate (SA). In Moorella thermoacetica (strain ATCC 39073 / JCM 9320), this protein is Shikimate dehydrogenase (NADP(+)).